Consider the following 292-residue polypeptide: NAD kinase (292 aa).

The active-site Proton acceptor is the D64. NAD(+)-binding positions include 64–65, 138–139, R149, R166, D168, 179–184, and Q238; these read DG, ND, and TGYAVS.

The protein belongs to the NAD kinase family. It depends on a divalent metal cation as a cofactor.

The protein localises to the cytoplasm. It catalyses the reaction NAD(+) + ATP = ADP + NADP(+) + H(+). Its function is as follows. Involved in the regulation of the intracellular balance of NAD and NADP, and is a key enzyme in the biosynthesis of NADP. Catalyzes specifically the phosphorylation on 2'-hydroxyl of the adenosine moiety of NAD to yield NADP. The chain is NAD kinase from Oleidesulfovibrio alaskensis (strain ATCC BAA-1058 / DSM 17464 / G20) (Desulfovibrio alaskensis).